Reading from the N-terminus, the 362-residue chain is 3-dehydroquinate synthase (362 aa).

NAD(+)-binding positions include Asp71–Lys76, Gly105–Asp109, Thr129–Thr130, Lys142, Lys151, and Cys169–Thr172. Residues Glu184, His247, and His264 each contribute to the Zn(2+) site.

The protein belongs to the sugar phosphate cyclases superfamily. Dehydroquinate synthase family. It depends on Co(2+) as a cofactor. Requires Zn(2+) as cofactor. NAD(+) is required as a cofactor.

The protein localises to the cytoplasm. It carries out the reaction 7-phospho-2-dehydro-3-deoxy-D-arabino-heptonate = 3-dehydroquinate + phosphate. It participates in metabolic intermediate biosynthesis; chorismate biosynthesis; chorismate from D-erythrose 4-phosphate and phosphoenolpyruvate: step 2/7. Catalyzes the conversion of 3-deoxy-D-arabino-heptulosonate 7-phosphate (DAHP) to dehydroquinate (DHQ). This Salmonella agona (strain SL483) protein is 3-dehydroquinate synthase.